The sequence spans 272 residues: Putative hydro-lyase RPD_1846 (272 aa).

The protein belongs to the D-glutamate cyclase family.

The chain is Putative hydro-lyase RPD_1846 from Rhodopseudomonas palustris (strain BisB5).